The chain runs to 388 residues: Diacylglycerol O-acyltransferase 2 (388 aa).

The Cytoplasmic segment spans residues 1 to 69 (MKTLIAAYSG…NRSKVEKQLQ (69 aa)). A helical membrane pass occupies residues 70 to 88 (VISVLQWVLSFLVLGVACS). Residues 89–92 (VILM) are Lumenal-facing. The helical transmembrane segment at 93–112 (YTFCTDCWLIAVLYFTWLAF) threads the bilayer. Over 113–388 (DWNTPKKGGR…LPETEVLEVN (276 aa)) the chain is Cytoplasmic.

It belongs to the diacylglycerol acyltransferase family. As to quaternary structure, forms multimeric complexes consisting of several DGAT2 subunits. Interacts with SLC27A1 and this interaction is enhanced in the presence of ZFYVE1. As to expression, predominantly expressed in liver. Also expressed in testis.

It localises to the endoplasmic reticulum membrane. The protein localises to the lipid droplet. The protein resides in the cytoplasm. Its subcellular location is the perinuclear region. It catalyses the reaction an acyl-CoA + a 1,2-diacyl-sn-glycerol = a triacyl-sn-glycerol + CoA. The enzyme catalyses all-trans-retinol + an acyl-CoA = an all-trans-retinyl ester + CoA. It carries out the reaction 1,2-di-(9Z-octadecenoyl)-sn-glycerol + hexadecanoyl-CoA = 1,2-di-(9Z)-octadecenoyl-3-hexadecanoyl-sn-glycerol + CoA. The catalysed reaction is 1,2-di-(9Z-octadecenoyl)-sn-glycerol + (9Z)-octadecenoyl-CoA = 1,2,3-tri-(9Z-octadecenoyl)-glycerol + CoA. It catalyses the reaction 1,3-di-(9Z-octadecenoyl)-glycerol + (9Z)-octadecenoyl-CoA = 1,2,3-tri-(9Z-octadecenoyl)-glycerol + CoA. The enzyme catalyses 2,3-di-(9Z)-octadecenoyl-sn-glycerol + (9Z)-octadecenoyl-CoA = 1,2,3-tri-(9Z-octadecenoyl)-glycerol + CoA. It carries out the reaction 2-(9Z-octadecenoyl)-glycerol + hexadecanoyl-CoA = 1-hexadecanoyl-2-(9Z-octadecenoyl)-sn-glycerol + CoA. The catalysed reaction is 2-(9Z-octadecenoyl)-glycerol + (9Z)-octadecenoyl-CoA = 1,2-di-(9Z-octadecenoyl)-sn-glycerol + CoA. It catalyses the reaction all-trans-retinol + hexadecanoyl-CoA = all-trans-retinyl hexadecanoate + CoA. The enzyme catalyses 1-O-(9Z-octadecenyl)-glycerol + (9Z)-octadecenoyl-CoA = 1-O-(9Z-octadecyl)-3-(9Z-octadecenoyl)-glycerol + CoA. It carries out the reaction 1-(9Z-octadecenoyl)-glycerol + (9Z)-octadecenoyl-CoA = 1,2-di-(9Z-octadecenoyl)-glycerol + CoA. The protein operates within glycerolipid metabolism; triacylglycerol biosynthesis. With respect to regulation, inhibited by niacin. Essential acyltransferase that catalyzes the terminal and only committed step in triacylglycerol synthesis by using diacylglycerol and fatty acyl CoA as substrates. Required for synthesis and storage of intracellular triglycerides. Probably plays a central role in cytosolic lipid accumulation. In liver, is primarily responsible for incorporating endogenously synthesized fatty acids into triglycerides. Also functions as an acyl-CoA retinol acyltransferase (ARAT). Also able to use 1-monoalkylglycerol (1-MAkG) as an acyl acceptor for the synthesis of monoalkyl-monoacylglycerol (MAMAG). The polypeptide is Diacylglycerol O-acyltransferase 2 (Mus musculus (Mouse)).